The primary structure comprises 416 residues: Gamma-glutamyl phosphate reductase (416 aa).

It belongs to the gamma-glutamyl phosphate reductase family.

The protein resides in the cytoplasm. It catalyses the reaction L-glutamate 5-semialdehyde + phosphate + NADP(+) = L-glutamyl 5-phosphate + NADPH + H(+). It participates in amino-acid biosynthesis; L-proline biosynthesis; L-glutamate 5-semialdehyde from L-glutamate: step 2/2. Its function is as follows. Catalyzes the NADPH-dependent reduction of L-glutamate 5-phosphate into L-glutamate 5-semialdehyde and phosphate. The product spontaneously undergoes cyclization to form 1-pyrroline-5-carboxylate. The chain is Gamma-glutamyl phosphate reductase from Salmonella schwarzengrund (strain CVM19633).